Consider the following 114-residue polypeptide: T cell receptor alpha variable 24 (114 aa).

Residues 1 to 22 (MEKNPLAAPLLILWFHLDCVSS) form the signal peptide. In terms of domain architecture, Ig-like spans 23–114 (ILNVEQSPQS…EDSATYLCAF (92 aa)). N42 carries an N-linked (GlcNAc...) asparagine glycan. C45 and C112 are disulfide-bonded.

Alpha-beta TR is a heterodimer composed of an alpha and beta chain; disulfide-linked. The alpha-beta TR is associated with the transmembrane signaling CD3 coreceptor proteins to form the TR-CD3 (TcR or TCR). The assembly of alpha-beta TR heterodimers with CD3 occurs in the endoplasmic reticulum where a single alpha-beta TR heterodimer associates with one CD3D-CD3E heterodimer, one CD3G-CD3E heterodimer and one CD247 homodimer forming a stable octameric structure. CD3D-CD3E and CD3G-CD3E heterodimers preferentially associate with TR alpha and TR beta chains, respectively. The association of the CD247 homodimer is the last step of TcR assembly in the endoplasmic reticulum and is required for transport to the cell surface.

Its subcellular location is the cell membrane. Functionally, v region of the variable domain of T cell receptor (TR) alpha chain that participates in the antigen recognition. Alpha-beta T cell receptors are antigen specific receptors which are essential to the immune response and are present on the cell surface of T lymphocytes. Recognize peptide-major histocompatibility (MH) (pMH) complexes that are displayed by antigen presenting cells (APC), a prerequisite for efficient T cell adaptive immunity against pathogens. Binding of alpha-beta TR to pMH complex initiates TR-CD3 clustering on the cell surface and intracellular activation of LCK that phosphorylates the ITAM motifs of CD3G, CD3D, CD3E and CD247 enabling the recruitment of ZAP70. In turn ZAP70 phosphorylates LAT, which recruits numerous signaling molecules to form the LAT signalosome. The LAT signalosome propagates signal branching to three major signaling pathways, the calcium, the mitogen-activated protein kinase (MAPK) kinase and the nuclear factor NF-kappa-B (NF-kB) pathways, leading to the mobilization of transcription factors that are critical for gene expression and essential for T cell growth and differentiation. The T cell repertoire is generated in the thymus, by V-(D)-J rearrangement. This repertoire is then shaped by intrathymic selection events to generate a peripheral T cell pool of self-MH restricted, non-autoaggressive T cells. Post-thymic interaction of alpha-beta TR with the pMH complexes shapes TR structural and functional avidity. This chain is T cell receptor alpha variable 24, found in Homo sapiens (Human).